A 418-amino-acid polypeptide reads, in one-letter code: Glutamyl-tRNA reductase (418 aa).

Substrate contacts are provided by residues 49–52 (TCNR), serine 106, 111–113 (EPQ), and glutamine 117. Cysteine 50 acts as the Nucleophile in catalysis. 186 to 191 (GAGEMI) serves as a coordination point for NADP(+).

It belongs to the glutamyl-tRNA reductase family. In terms of assembly, homodimer.

The catalysed reaction is (S)-4-amino-5-oxopentanoate + tRNA(Glu) + NADP(+) = L-glutamyl-tRNA(Glu) + NADPH + H(+). It functions in the pathway porphyrin-containing compound metabolism; protoporphyrin-IX biosynthesis; 5-aminolevulinate from L-glutamyl-tRNA(Glu): step 1/2. Its function is as follows. Catalyzes the NADPH-dependent reduction of glutamyl-tRNA(Glu) to glutamate 1-semialdehyde (GSA). This Alcanivorax borkumensis (strain ATCC 700651 / DSM 11573 / NCIMB 13689 / SK2) protein is Glutamyl-tRNA reductase.